We begin with the raw amino-acid sequence, 294 residues long: 4-hydroxy-tetrahydrodipicolinate synthase (294 aa).

Thr48 is a binding site for pyruvate. The active-site Proton donor/acceptor is Tyr136. Residue Lys164 is the Schiff-base intermediate with substrate of the active site. Ile206 is a binding site for pyruvate.

Belongs to the DapA family. In terms of assembly, homotetramer; dimer of dimers.

It is found in the cytoplasm. It carries out the reaction L-aspartate 4-semialdehyde + pyruvate = (2S,4S)-4-hydroxy-2,3,4,5-tetrahydrodipicolinate + H2O + H(+). Its pathway is amino-acid biosynthesis; L-lysine biosynthesis via DAP pathway; (S)-tetrahydrodipicolinate from L-aspartate: step 3/4. Functionally, catalyzes the condensation of (S)-aspartate-beta-semialdehyde [(S)-ASA] and pyruvate to 4-hydroxy-tetrahydrodipicolinate (HTPA). This chain is 4-hydroxy-tetrahydrodipicolinate synthase, found in Phenylobacterium zucineum (strain HLK1).